Consider the following 183-residue polypeptide: uncharacterized protein (183 aa).

4 helical membrane passes run 26-48, 72-91, 104-121, and 125-147; these read FVAI…IIFY, LLVR…KVFI, IIEA…LIVF, and FTFW…YVLL.

It localises to the cell membrane. This is an uncharacterized protein from Aquifex aeolicus (strain VF5).